The following is a 559-amino-acid chain: NXPE family member 3 (559 aa).

The N-terminal stretch at 1 to 30 is a signal peptide; sequence MWTNFFKLRLFCCLLAVLMVVVLVINVTQV. Asn237, Asn292, and Asn346 each carry an N-linked (GlcNAc...) asparagine glycan.

Belongs to the NXPE family.

It localises to the secreted. The protein is NXPE family member 3 (NXPE3) of Homo sapiens (Human).